The sequence spans 146 residues: Hemoglobin subunit beta (146 aa).

V1 carries the N-acetylvaline modification. The Globin domain maps to 2 to 146 (HLTADEKAAV…VANALAHKYH (145 aa)). T12 carries the phosphothreonine modification. S44 carries the phosphoserine modification. Position 59 is an N6-acetyllysine (K59). Residue H63 participates in heme b binding. The residue at position 82 (K82) is an N6-acetyllysine. H92 lines the heme b pocket. C93 is subject to S-nitrosocysteine. K144 is subject to N6-acetyllysine.

The protein belongs to the globin family. As to quaternary structure, heterotetramer of two alpha chains and two beta chains. Red blood cells.

Involved in oxygen transport from the lung to the various peripheral tissues. This is Hemoglobin subunit beta (HBB) from Odobenus rosmarus divergens (Pacific walrus).